We begin with the raw amino-acid sequence, 107 residues long: U1-lycotoxin-Ls1e (107 aa).

An N-terminal signal peptide occupies residues 1–20 (MMKVLVVFALLVTLISYSSS). Residues 21-41 (EGIDDLEADELLSLMANEQTR) constitute a propeptide that is removed on maturation. 4 disulfide bridges follow: C44–C59, C51–C68, C58–C86, and C70–C84.

This sequence belongs to the neurotoxin 19 (CSTX) family. 04 (U1-Lctx) subfamily. Expressed by the venom gland.

The protein localises to the secreted. The protein is U1-lycotoxin-Ls1e of Lycosa singoriensis (Wolf spider).